A 423-amino-acid chain; its full sequence is Serine--tRNA ligase (423 aa).

L-serine is bound at residue 230 to 232; that stretch reads TSE. 261–263 provides a ligand contact to ATP; the sequence is RSE. Position 284 (Glu284) interacts with L-serine. 348-351 is a binding site for ATP; it reads EISS. Ser384 serves as a coordination point for L-serine.

Belongs to the class-II aminoacyl-tRNA synthetase family. Type-1 seryl-tRNA synthetase subfamily. As to quaternary structure, homodimer. The tRNA molecule binds across the dimer.

It localises to the cytoplasm. The enzyme catalyses tRNA(Ser) + L-serine + ATP = L-seryl-tRNA(Ser) + AMP + diphosphate + H(+). The catalysed reaction is tRNA(Sec) + L-serine + ATP = L-seryl-tRNA(Sec) + AMP + diphosphate + H(+). It participates in aminoacyl-tRNA biosynthesis; selenocysteinyl-tRNA(Sec) biosynthesis; L-seryl-tRNA(Sec) from L-serine and tRNA(Sec): step 1/1. Catalyzes the attachment of serine to tRNA(Ser). Is also able to aminoacylate tRNA(Sec) with serine, to form the misacylated tRNA L-seryl-tRNA(Sec), which will be further converted into selenocysteinyl-tRNA(Sec). This Macrococcus caseolyticus (strain JCSC5402) (Macrococcoides caseolyticum) protein is Serine--tRNA ligase.